The chain runs to 602 residues: Sodium- and chloride-dependent GABA transporter 2 (602 aa).

Residues 1 to 40 lie on the Cytoplasmic side of the membrane; that stretch reads MDSRVSGTTSNGETKPVCPGLEKAAEDGALQREQWSNKME. 3 helical membrane-spanning segments follow: residues 41–61, 68–88, and 121–141; these read FLLS…FPYL, GAFF…VFLL, and IVTL…FYLF. Over 142–206 the chain is Extracellular; sequence SSFTIDLPWG…GIQHLGALRW (65 aa). Cys-153 and Cys-162 are oxidised to a cystine. N-linked (GlcNAc...) asparagine glycosylation is found at Asn-169 and Asn-173. The next 2 membrane-spanning stretches (helical) occupy residues 207–227 and 233–253; these read ELAL…WKGV and VVYF…IRGV. Residue Asn-269 is glycosylated (N-linked (GlcNAc...) asparagine). Helical transmembrane passes span 282–302, 319–339, 366–386, 418–438, 453–473, 490–510, and 528–548; these read AGTQ…ALGS, FLNS…LGFM, VVML…VVLL, VLIL…LTEG, GMCL…AYGA, PLIK…TFLF, and WWGD…IPAW. The Cytoplasmic segment spans residues 549 to 602; that stretch reads SCYKLSTLKGSFRERVRQLLCPAKDLPQGHREGPSAPATPRTSLLILTELEPHH. Position 587 is a phosphothreonine (Thr-587). Residue Ser-591 is modified to Phosphoserine.

It belongs to the sodium:neurotransmitter symporter (SNF) (TC 2.A.22) family. SLC6A13 subfamily.

The protein localises to the cell membrane. It is found in the basolateral cell membrane. It carries out the reaction 4-aminobutanoate(out) + chloride(out) + 2 Na(+)(out) = 4-aminobutanoate(in) + chloride(in) + 2 Na(+)(in). The enzyme catalyses taurine(out) + chloride(out) + 2 Na(+)(out) = taurine(in) + chloride(in) + 2 Na(+)(in). It catalyses the reaction beta-alanine(out) + chloride(out) + 2 Na(+)(out) = beta-alanine(in) + chloride(in) + 2 Na(+)(in). The catalysed reaction is hypotaurine(out) + chloride(out) + 2 Na(+)(out) = hypotaurine(in) + chloride(in) + 2 Na(+)(in). In terms of biological role, mediates sodium- and chloride-dependent transport of gamma-aminobutyric acid (GABA). Can also mediate transport of beta-alanine, taurine and hypotaurine. The polypeptide is Sodium- and chloride-dependent GABA transporter 2 (SLC6A13) (Bos taurus (Bovine)).